A 150-amino-acid polypeptide reads, in one-letter code: Avidin-related protein 6 (150 aa).

Positions 1 to 24 are cleaved as a signal peptide; it reads MVHATSPLLLLLLLSLALVAPGLS. The 122-residue stretch at 26–147 folds into the Avidin-like domain; sequence RKCSLTGEWD…GYNNFTRQRT (122 aa). Cys-28 and Cys-105 are disulfide-bonded. Residues Asn-36 and Ser-40 each contribute to the biotin site. Asn-54 carries an N-linked (GlcNAc...) asparagine glycan. Biotin contacts are provided by Tyr-57, Thr-59, and Asp-63. The N-linked (GlcNAc...) asparagine glycan is linked to Asn-93. Biotin-binding residues include Ser-95, Ser-99, and Asn-140. A glycan (N-linked (GlcNAc...) asparagine) is linked at Asn-141.

It belongs to the avidin/streptavidin family. As to quaternary structure, homotetramer. Post-translationally, glycosylated.

It is found in the secreted. Functionally, forms a strong non-covalent specific complex with biotin. The protein is Avidin-related protein 6 (AVR6) of Gallus gallus (Chicken).